Reading from the N-terminus, the 171-residue chain is NADH-quinone oxidoreductase subunit I 2 (171 aa).

2 4Fe-4S ferredoxin-type domains span residues 39–71 and 81–110; these read IVLTRDPDGQERCVACNLCAVACPVGCIDLSKA and EHFRINFARCIFCGYCEEACPTAAIQLTPD. [4Fe-4S] cluster is bound by residues Cys-51, Cys-54, Cys-57, Cys-61, Cys-90, Cys-93, Cys-96, and Cys-100.

This sequence belongs to the complex I 23 kDa subunit family. In terms of assembly, NDH-1 is composed of 14 different subunits. Subunits NuoA, H, J, K, L, M, N constitute the membrane sector of the complex. The cofactor is [4Fe-4S] cluster.

It is found in the cell inner membrane. It catalyses the reaction a quinone + NADH + 5 H(+)(in) = a quinol + NAD(+) + 4 H(+)(out). In terms of biological role, NDH-1 shuttles electrons from NADH, via FMN and iron-sulfur (Fe-S) centers, to quinones in the respiratory chain. The immediate electron acceptor for the enzyme in this species is believed to be ubiquinone. Couples the redox reaction to proton translocation (for every two electrons transferred, four hydrogen ions are translocated across the cytoplasmic membrane), and thus conserves the redox energy in a proton gradient. The sequence is that of NADH-quinone oxidoreductase subunit I 2 from Rhodopseudomonas palustris (strain BisB18).